The following is a 538-amino-acid chain: RNA-binding protein RO60 (538 aa).

Positions 16-369 (VPNSEGCYVW…SFKLVEPTGK (354 aa)) constitute a TROVE domain. The RNA-binding stretch occupies residues 120 to 284 (RIPTHLFTFI…DMPLTALLRN (165 aa)). Residues 361–538 (FKLVEPTGKR…VIRNFTLDLI (178 aa)) are VWFA-like domain. Residues S378, S380, and T445 each contribute to the a divalent metal cation site.

It belongs to the Ro 60 kDa family.

The protein resides in the cytoplasm. Functionally, RNA-binding protein that binds to misfolded non-coding RNAs, pre-5S rRNA, and several small cytoplasmic RNA molecules known as Y RNAs. May play roles in cilia formation and/or maintenance. This is RNA-binding protein RO60 from Xenopus laevis (African clawed frog).